The primary structure comprises 156 residues: Maintenance of carboxysome distribution protein B (156 aa).

The tract at residues 1-55 is required for interaction with McdA:DNA complex; it reads MSNNALDRLINKQKPKVPPRNDVVSESVSNDIKTQGQQELNTSLPPSDTKATPEE. The tract at residues 1–79 is disordered; it reads MSNNALDRLI…QKPKLSPDTF (79 aa). The segment covering 24–50 has biased composition (polar residues); the sequence is VSESVSNDIKTQGQQELNTSLPPSDTK. Basic and acidic residues predominate over residues 51–63; sequence ATPEEMPTSHESE. Positions 122 to 156 form a coiled coil; the sequence is PEELAQVIQLAQERLSQRKAIADYKRAKTMQERFL.

Homodimerizes; may exist in higher order oligomers in solution. Forms a complex with McdA:DNA. Homohexamerizes, interacts with shell components of the carboxysome.

The protein resides in the carboxysome. Its function is as follows. McdA and McdB together mediate carboxysome (Cb) spacing, size, ultrastructure and probably inheritance in the cell, together they prevent Cb aggregation. McdA is an ATPase that forms dynamic gradients on the nucleoid in response to adapter protein McdB, which associates with carboxysomes. The interplay between McdA gradients on the nucleoid and McdB-bound carboxysomes result in the equal spacing of Cbs along the cell length. Stimulates the ATPase activity of McdA, causing McdA to be released from DNA. Undergoes liquid-liquid phase separation. In terms of biological role, incorrect positioning (aggregation) of carboxysomes results in reduced CO(2) fixation by encapsulated ribulose-1,5-bisphosphate carboxylase (RuBisCO, cbbL/cbbS), which leads to slower growth. The protein is Maintenance of carboxysome distribution protein B of Gloeothece citriformis (strain PCC 7424) (Cyanothece sp. (strain PCC 7424)).